The sequence spans 766 residues: Pumilio domain-containing protein 12 (766 aa).

2 disordered regions span residues 63–98 (KKSS…KSKK) and 152–197 (AQEE…GDES). Residues 79 to 88 (SLCSESSFGS) are compositionally biased toward polar residues. The segment covering 179–193 (PADDENLESVDEQAG) has biased composition (acidic residues). The PUM-HD domain maps to 245-602 (ARAQKCKELW…LYAGITENLY (358 aa)). Pumilio repeat units follow at residues 313-348 (ELTP…IIIN), 461-496 (SLKD…LIVK), 497-534 (NFKD…VIVS), and 535-571 (ELAN…REIT).

The sequence is that of Pumilio domain-containing protein 12 (puf-12) from Caenorhabditis elegans.